The chain runs to 607 residues: Autophagy-related protein 16-1 (607 aa).

An interaction with ATG5 region spans residues 13 to 43; sequence WKRHIAEELRRRDRLQRQAFEEIILQYTKLL. Residues 79–230 are a coiled coil; the sequence is DSQLQEMAQL…QKELAEAAKE (152 aa). Serine 139 carries the phosphoserine modification. A WIPI2-binding region spans residues 207-230; the sequence is AENEKDSRRRQARLQKELAEAAKE. The interval 230-242 is RB1CC1-binding; the sequence is EPLPVEQDDDIEV. Phosphoserine occurs at positions 269 and 287. The Caspase cleavage signature appears at 296–299; sequence DIMD. WD repeat units follow at residues 320–359, 364–403, 406–445, 447–484, 486–525, 532–573, and 575–607; these read AHDGEVNAVQFSPGSRLLATGGMDRRVKLWEAFGDKCEFK, GSNAGITSIEFDSAGAYLLAASNDFASRIWTVDDYRLRHT, GHSGKVLSAKFLLDNARIVSGSHDRTLKLWDLRSKVCIKT, FAGSSCNDIVCTEQCVMSGHFDKKIRFWDIRSESVVRE, ELLGKITALDLNPERTELLSCSRDDLLKVIDLRTNAVKQT, KCGS…KVLS, and QHSSSINAVAWAPSGLHVVSVDKGSRAVLWAQP.

This sequence belongs to the WD repeat ATG16 family. As to quaternary structure, homodimer. Homooligomer. Heterooligomer with ATG16L2. Interacts with WIPI1. Interacts with WIPI2. Interacts with RB1CC1; the interaction is required for ULK1 complex-dependent autophagy. Interacts with ATG5. Part of the minor complex composed of 4 sets of ATG12-ATG5 and ATG16L1 (400 kDa); this complex interacts with ATG3 leading to disruption of ATG7 interaction and promotion of ATG8-like proteins lipidation. Part of the major complex composed of 8 sets of ATG12-ATG5 and ATG16L1 (800 kDa). Interacts with RAB33B (GTP- and GDP-bound forms); the complex consists of a tetramer where two RAB33B molecules bind independently one molecule of the ATG16L1 homodimer; the interaction promotes ATG12-ATG5-ATG16L1 complex recruitment to phagophores. Interacts (via WD repeats) with TMEM59; the interaction mediates unconventional autophagic activity of TMEM59. Interacts with TLR2. Interacts (via WD repeats) with MEFV. Interacts (via N-terminal) with CLTC. Interacts with NOD1. Interacts with NOD2. Interacts with TUFM. Interacts with TRIM16. Interacts (via WD repeats) with SPATA33. Interacts with Irgm1. In terms of processing, proteolytic cleavage by activated CASP3 leads to degradation and may regulate autophagy upon cellular stress and apoptotic stimuli. Phosphorylation at Ser-139 promotes association with the ATG12-ATG5 conjugate to form the ATG12-ATG5-ATG16L1 complex. As to expression, widely expressed. Expressed in the testis and sperm midpiece (at protein level). In terms of tissue distribution, expressed in liver. Highly expressed in liver. As to expression, expressed in brain.

It is found in the cytoplasm. Its subcellular location is the preautophagosomal structure membrane. The protein resides in the endosome membrane. It localises to the lysosome membrane. In terms of biological role, plays an essential role in both canonical and non-canonical autophagy: interacts with ATG12-ATG5 to mediate the lipidation to ATG8 family proteins (MAP1LC3A, MAP1LC3B, MAP1LC3C, GABARAPL1, GABARAPL2 and GABARAP). Acts as a molecular hub, coordinating autophagy pathways via distinct domains that support either canonical or non-canonical signaling. During canonical autophagy, interacts with ATG12-ATG5 to mediate the conjugation of phosphatidylethanolamine (PE) to ATG8 proteins, to produce a membrane-bound activated form of ATG8. Thereby, controls the elongation of the nascent autophagosomal membrane. As part of the ATG8 conjugation system with ATG5 and ATG12, required for recruitment of LRRK2 to stressed lysosomes and induction of LRRK2 kinase activity in response to lysosomal stress. Also involved in non-canonical autophagy, a parallel pathway involving conjugation of ATG8 proteins to single membranes at endolysosomal compartments, probably by catalyzing conjugation of phosphatidylserine (PS) to ATG8. Non-canonical autophagy plays a key role in epithelial cells to limit lethal infection by influenza A (IAV) virus. Regulates mitochondrial antiviral signaling (MAVS)-dependent type I interferon (IFN-I) production. Negatively regulates NOD1- and NOD2-driven inflammatory cytokine response. Instead, promotes an autophagy-dependent antibacterial pathway together with NOD1 or NOD2. Plays a role in regulating morphology and function of Paneth cell. This chain is Autophagy-related protein 16-1, found in Mus musculus (Mouse).